A 591-amino-acid chain; its full sequence is L-fucose isomerase (591 aa).

Catalysis depends on proton acceptor residues Glu-337 and Asp-361. The Mn(2+) site is built by Glu-337, Asp-361, and His-528.

The protein belongs to the L-fucose isomerase family. In terms of assembly, homohexamer. Mn(2+) serves as cofactor.

The protein resides in the cytoplasm. It carries out the reaction L-fucose = L-fuculose. Its pathway is carbohydrate degradation; L-fucose degradation; L-lactaldehyde and glycerone phosphate from L-fucose: step 1/3. Functionally, converts the aldose L-fucose into the corresponding ketose L-fuculose. This chain is L-fucose isomerase, found in Salmonella paratyphi A (strain ATCC 9150 / SARB42).